A 501-amino-acid polypeptide reads, in one-letter code: ATP synthase subunit alpha (501 aa).

169-176 (GDRQTGKT) serves as a coordination point for ATP.

The protein belongs to the ATPase alpha/beta chains family. In terms of assembly, F-type ATPases have 2 components, CF(1) - the catalytic core - and CF(0) - the membrane proton channel. CF(1) has five subunits: alpha(3), beta(3), gamma(1), delta(1), epsilon(1). CF(0) has three main subunits: a(1), b(2) and c(9-12). The alpha and beta chains form an alternating ring which encloses part of the gamma chain. CF(1) is attached to CF(0) by a central stalk formed by the gamma and epsilon chains, while a peripheral stalk is formed by the delta and b chains.

It localises to the cell inner membrane. The enzyme catalyses ATP + H2O + 4 H(+)(in) = ADP + phosphate + 5 H(+)(out). In terms of biological role, produces ATP from ADP in the presence of a proton gradient across the membrane. The alpha chain is a regulatory subunit. The chain is ATP synthase subunit alpha from Campylobacter lari (strain RM2100 / D67 / ATCC BAA-1060).